We begin with the raw amino-acid sequence, 109 residues long: UPF0060 membrane protein PSPA7_1846 (109 aa).

Helical transmembrane passes span 5–25 (LWFVLAAFCEIAGCYAFYLWL), 27–47 (LGKSALWVLPGLLSLSLFALL), 59–79 (AYAAYGGIYVAASLFWLAFVE), and 84–104 (LWSDWLGVALCVLGASIVLFG).

Belongs to the UPF0060 family.

It is found in the cell inner membrane. The protein is UPF0060 membrane protein PSPA7_1846 of Pseudomonas paraeruginosa (strain DSM 24068 / PA7) (Pseudomonas aeruginosa (strain PA7)).